A 375-amino-acid chain; its full sequence is tRNA (guanine(26)-N(2))-dimethyltransferase (375 aa).

The region spanning 2–368 (KYITEGNTKL…AKLIDIVEFI (367 aa)) is the Trm1 methyltransferase domain. S-adenosyl-L-methionine is bound by residues arginine 35, arginine 66, aspartate 89, aspartate 116, and alanine 117.

This sequence belongs to the class I-like SAM-binding methyltransferase superfamily. Trm1 family.

The enzyme catalyses guanosine(26) in tRNA + 2 S-adenosyl-L-methionine = N(2)-dimethylguanosine(26) in tRNA + 2 S-adenosyl-L-homocysteine + 2 H(+). Dimethylates a single guanine residue at position 26 of a number of tRNAs using S-adenosyl-L-methionine as donor of the methyl groups. The chain is tRNA (guanine(26)-N(2))-dimethyltransferase from Methanococcus aeolicus (strain ATCC BAA-1280 / DSM 17508 / OCM 812 / Nankai-3).